The chain runs to 132 residues: uncharacterized protein (132 aa).

This is an uncharacterized protein from Botryotinia fuckeliana (Noble rot fungus).